The following is a 235-amino-acid chain: Adenosine 5'-phosphosulfate reductase (235 aa).

The [4Fe-4S] cluster site is built by cysteine 121, cysteine 122, cysteine 204, and cysteine 207. Catalysis depends on cysteine 230, which acts as the Nucleophile; cysteine thiosulfonate intermediate.

This sequence belongs to the PAPS reductase family. CysH subfamily. Requires [4Fe-4S] cluster as cofactor.

The protein localises to the cytoplasm. It carries out the reaction [thioredoxin]-disulfide + sulfite + AMP + 2 H(+) = adenosine 5'-phosphosulfate + [thioredoxin]-dithiol. Its pathway is sulfur metabolism; hydrogen sulfide biosynthesis; sulfite from sulfate. Functionally, catalyzes the formation of sulfite from adenosine 5'-phosphosulfate (APS) using thioredoxin as an electron donor. This chain is Adenosine 5'-phosphosulfate reductase, found in Geobacillus sp. (strain WCH70).